A 447-amino-acid polypeptide reads, in one-letter code: MREILHIQGGQCGNQIGAKFWEVVCAEHGIDATGRYDGDSDLQLERVNVYYNEASCGRFVPRAVLMDLEPGTMDSVRSGPYGHIFRPDNFVFGQSGAGNNWAKGHYTEGAELIDAVLDVVRKEAENCDCLQGFQVCHSLGGGTGSGMGTLLISKIREEYPDRMMLTFSVFPSPKVSDTVVEPYNATLSVHQLVENADECMVLDNEALYDICFRTLKLTTPSFGDLNHLISATMSGVTCCLRFPGQLNSDLRKLAVNLIPFPRLHFFMVGFAPLTSRGSQQYRALTVPELTQQMWDAKNMMCAADPRHGRYLTASAMFRGKMSTKEVDEQMLNVQNKNSSYFVEWIPNNVKSTVCDIPPTGLKMASTFIGNSTSIQEMFRRVSEQFTAMFRRKAFLHWYTGEGMDEMEFTEAESNMNDLVSEYQQYQDATADDEGEYEDEEEEADLQD.

GTP contacts are provided by Gln11, Glu69, Ser138, Gly142, Thr143, Gly144, Asn204, and Asn226. Glu69 is a Mg(2+) binding site. Positions 419–447 are disordered; that stretch reads VSEYQQYQDATADDEGEYEDEEEEADLQD. The segment covering 429–447 has biased composition (acidic residues); that stretch reads TADDEGEYEDEEEEADLQD.

It belongs to the tubulin family. Dimer of alpha and beta chains. A typical microtubule is a hollow water-filled tube with an outer diameter of 25 nm and an inner diameter of 15 nM. Alpha-beta heterodimers associate head-to-tail to form protofilaments running lengthwise along the microtubule wall with the beta-tubulin subunit facing the microtubule plus end conferring a structural polarity. Microtubules usually have 13 protofilaments but different protofilament numbers can be found in some organisms and specialized cells. Requires Mg(2+) as cofactor. In terms of tissue distribution, expressed in leaf sheaths and suspension cultured cells.

The protein resides in the cytoplasm. It is found in the cytoskeleton. In terms of biological role, tubulin is the major constituent of microtubules, a cylinder consisting of laterally associated linear protofilaments composed of alpha- and beta-tubulin heterodimers. Microtubules grow by the addition of GTP-tubulin dimers to the microtubule end, where a stabilizing cap forms. Below the cap, tubulin dimers are in GDP-bound state, owing to GTPase activity of alpha-tubulin. The protein is Tubulin beta-2 chain (TUBB2) of Oryza sativa subsp. japonica (Rice).